A 490-amino-acid chain; its full sequence is Sulfate adenylyltransferase (490 aa).

The N-terminal stretch occupies residues Met1–Phe165. Residues Asp166–Ser390 form a catalytic region. Gln193 contributes to the sulfate binding site. ATP-binding positions include Gln193 to Asn196 and Gly287 to His290. Active-site residues include Thr194, Arg195, and Asn196. Residue Arg195 coordinates sulfate. Ala291 contacts sulfate. Residue Met329 participates in ATP binding. Thr356 carries the post-translational modification Phosphothreonine. The required for oligomerization; adenylyl-sulfate kinase-like stretch occupies residues Gln391–Leu490.

It belongs to the sulfate adenylyltransferase family. In terms of assembly, homohexamer. Dimer of trimers.

It is found in the cytoplasm. It catalyses the reaction sulfate + ATP + H(+) = adenosine 5'-phosphosulfate + diphosphate. The protein operates within sulfur metabolism; hydrogen sulfide biosynthesis; sulfite from sulfate: step 1/3. Its function is as follows. Catalyzes the first intracellular reaction of sulfate assimilation, forming adenosine-5'-phosphosulfate (APS) from inorganic sulfate and ATP. Plays an important role in sulfate activation as a component of the biosynthesis pathway of sulfur-containing amino acids. This Schizosaccharomyces pombe (strain 972 / ATCC 24843) (Fission yeast) protein is Sulfate adenylyltransferase (sua1).